The following is a 106-amino-acid chain: Protein aveugle (106 aa).

The 66-residue stretch at 26 to 91 folds into the SAM domain; sequence WTVSDVLKWY…WREIVKQRLK (66 aa).

Interacts with the SAM domain of cnk.

Its subcellular location is the cytoplasm. It localises to the membrane. In terms of biological role, required for normal photoreceptor differentiation between Ras and Raf for EGFR signaling in the eye and for mitogen-activated protein kinase phosphorylation. Probably acts together with Cnk to promote Raf activation, perhaps by recruiting an activating kinase. The chain is Protein aveugle (ave) from Drosophila melanogaster (Fruit fly).